Reading from the N-terminus, the 783-residue chain is Lon protease (783 aa).

Residues 11-203 (IPVLPLRDVV…FLMGQMESEI (193 aa)) form the Lon N-terminal domain. 355-362 (GPPGVGKT) is a binding site for ATP. The Lon proteolytic domain maps to 591–772 (SNRIGQVTGL…DEVLKVALER (182 aa)). Active-site residues include Ser678 and Lys721.

The protein belongs to the peptidase S16 family. Homohexamer. Organized in a ring with a central cavity.

The protein localises to the cytoplasm. The catalysed reaction is Hydrolysis of proteins in presence of ATP.. Functionally, ATP-dependent serine protease that mediates the selective degradation of mutant and abnormal proteins as well as certain short-lived regulatory proteins. Required for cellular homeostasis and for survival from DNA damage and developmental changes induced by stress. Degrades polypeptides processively to yield small peptide fragments that are 5 to 10 amino acids long. Binds to DNA in a double-stranded, site-specific manner. Regulates swarmer cell differentiation of V.parahaemolyticus. The protein is Lon protease of Vibrio parahaemolyticus serotype O3:K6 (strain RIMD 2210633).